The sequence spans 395 residues: Putative gustatory receptor 93b (395 aa).

Residues Met-1 to Arg-18 lie on the Cytoplasmic side of the membrane. The chain crosses the membrane as a helical span at residues Ile-19–Phe-39. At Arg-40–Ala-89 the chain is on the extracellular side. Residues Phe-90–Phe-110 traverse the membrane as a helical segment. The Cytoplasmic portion of the chain corresponds to Trp-111–Lys-153. Residues Val-154–Leu-174 traverse the membrane as a helical segment. The Extracellular portion of the chain corresponds to Thr-175–Ser-183. Residues Val-184–Tyr-204 traverse the membrane as a helical segment. The Cytoplasmic portion of the chain corresponds to Arg-205–Pro-267. A helical membrane pass occupies residues Leu-268–Leu-288. Topologically, residues Arg-289–Ser-293 are extracellular. A helical membrane pass occupies residues Phe-294–Val-314. Residues His-315 to Glu-369 are Cytoplasmic-facing. Residues Leu-370–Met-390 traverse the membrane as a helical segment. Residues Gln-391–Ile-395 are Extracellular-facing.

Belongs to the insect chemoreceptor superfamily. Gustatory receptor (GR) family. Gr93a subfamily. In terms of tissue distribution, in larvae, is expressed in neurons of the terminal external chemosensory organ and of the dorsal pharyngeal sense organ.

Its subcellular location is the cell membrane. Its function is as follows. Probable gustatory receptor which mediates acceptance or avoidance behavior, depending on its substrates. In Drosophila melanogaster (Fruit fly), this protein is Putative gustatory receptor 93b (Gr93b).